The following is a 463-amino-acid chain: 3-phosphoshikimate 1-carboxyvinyltransferase (463 aa).

The 3-phosphoshikimate site is built by K26, S27, and R31. K26 is a binding site for phosphoenolpyruvate. The phosphoenolpyruvate site is built by G99 and R127. Positions 163, 164, 165, 188, 300, and 327 each coordinate 3-phosphoshikimate. Q165 lines the phosphoenolpyruvate pocket. D300 acts as the Proton acceptor in catalysis. R331 and R372 together coordinate phosphoenolpyruvate.

The protein belongs to the EPSP synthase family. As to quaternary structure, monomer.

It localises to the cytoplasm. The enzyme catalyses 3-phosphoshikimate + phosphoenolpyruvate = 5-O-(1-carboxyvinyl)-3-phosphoshikimate + phosphate. The protein operates within metabolic intermediate biosynthesis; chorismate biosynthesis; chorismate from D-erythrose 4-phosphate and phosphoenolpyruvate: step 6/7. Its function is as follows. Catalyzes the transfer of the enolpyruvyl moiety of phosphoenolpyruvate (PEP) to the 5-hydroxyl of shikimate-3-phosphate (S3P) to produce enolpyruvyl shikimate-3-phosphate and inorganic phosphate. This is 3-phosphoshikimate 1-carboxyvinyltransferase from Burkholderia pseudomallei (Pseudomonas pseudomallei).